Here is a 297-residue protein sequence, read N- to C-terminus: Phosphoribosylaminoimidazole-succinocarboxamide synthase (297 aa).

It belongs to the SAICAR synthetase family.

It catalyses the reaction 5-amino-1-(5-phospho-D-ribosyl)imidazole-4-carboxylate + L-aspartate + ATP = (2S)-2-[5-amino-1-(5-phospho-beta-D-ribosyl)imidazole-4-carboxamido]succinate + ADP + phosphate + 2 H(+). Its pathway is purine metabolism; IMP biosynthesis via de novo pathway; 5-amino-1-(5-phospho-D-ribosyl)imidazole-4-carboxamide from 5-amino-1-(5-phospho-D-ribosyl)imidazole-4-carboxylate: step 1/2. The sequence is that of Phosphoribosylaminoimidazole-succinocarboxamide synthase from Corynebacterium glutamicum (strain R).